The following is a 73-amino-acid chain: Putative membrane protein insertion efficiency factor (73 aa).

It belongs to the UPF0161 family.

Its subcellular location is the cell inner membrane. In terms of biological role, could be involved in insertion of integral membrane proteins into the membrane. The chain is Putative membrane protein insertion efficiency factor from Neisseria meningitidis serogroup C (strain 053442).